The sequence spans 382 residues: Ribosomal RNA large subunit methyltransferase G (382 aa).

Belongs to the methyltransferase superfamily. RlmG family.

It localises to the cytoplasm. It carries out the reaction guanosine(1835) in 23S rRNA + S-adenosyl-L-methionine = N(2)-methylguanosine(1835) in 23S rRNA + S-adenosyl-L-homocysteine + H(+). Specifically methylates the guanine in position 1835 (m2G1835) of 23S rRNA. In Aliivibrio fischeri (strain MJ11) (Vibrio fischeri), this protein is Ribosomal RNA large subunit methyltransferase G.